Consider the following 141-residue polypeptide: Hemoglobin subunit alpha (141 aa).

One can recognise a Globin domain in the interval 1–141 (VLSPADKNNV…VSTVLTSKYR (141 aa)). At Ser3 the chain carries Phosphoserine. An N6-succinyllysine mark is found at Lys7 and Lys11. Lys16 carries the post-translational modification N6-acetyllysine; alternate. N6-succinyllysine; alternate is present on Lys16. Tyr24 carries the phosphotyrosine modification. Phosphoserine is present on Ser35. Lys40 is subject to N6-succinyllysine. A Phosphoserine modification is found at Ser49. His58 is a binding site for O2. His87 serves as a coordination point for heme b. Ser102 carries the phosphoserine modification. Phosphothreonine is present on Thr108. Phosphoserine occurs at positions 124 and 131. Thr134 and Thr137 each carry phosphothreonine. The residue at position 138 (Ser138) is a Phosphoserine.

The protein belongs to the globin family. In terms of assembly, heterotetramer of two alpha chains and two beta chains. In terms of tissue distribution, red blood cells.

Functionally, involved in oxygen transport from the lung to the various peripheral tissues. In terms of biological role, hemopressin acts as an antagonist peptide of the cannabinoid receptor CNR1. Hemopressin-binding efficiently blocks cannabinoid receptor CNR1 and subsequent signaling. The protein is Hemoglobin subunit alpha (HBA) of Urocitellus townsendii (Townsend's ground squirrel).